A 389-amino-acid chain; its full sequence is S-adenosylmethionine synthase (389 aa).

ATP is bound at residue His15. Mg(2+) is bound at residue Asp17. Glu43 is a binding site for K(+). Residues Glu56 and Gln99 each contribute to the L-methionine site. A flexible loop region spans residues 99–109; sequence QSPDIAQGVNE. Residues 166-168, 234-235, Asp243, 249-250, Ala266, and Lys270 each bind ATP; these read DAK, RF, and RK. Asp243 contacts L-methionine. Residue Lys274 participates in L-methionine binding.

Belongs to the AdoMet synthase family. Homotetramer; dimer of dimers. The cofactor is Mg(2+). K(+) serves as cofactor.

The protein resides in the cytoplasm. It carries out the reaction L-methionine + ATP + H2O = S-adenosyl-L-methionine + phosphate + diphosphate. Its pathway is amino-acid biosynthesis; S-adenosyl-L-methionine biosynthesis; S-adenosyl-L-methionine from L-methionine: step 1/1. In terms of biological role, catalyzes the formation of S-adenosylmethionine (AdoMet) from methionine and ATP. The overall synthetic reaction is composed of two sequential steps, AdoMet formation and the subsequent tripolyphosphate hydrolysis which occurs prior to release of AdoMet from the enzyme. The sequence is that of S-adenosylmethionine synthase from Neisseria meningitidis serogroup B (strain ATCC BAA-335 / MC58).